We begin with the raw amino-acid sequence, 390 residues long: S-adenosylmethionine synthase (390 aa).

Glu-12 serves as a coordination point for Mg(2+). Position 18 (His-18) interacts with ATP. Glu-46 contributes to the K(+) binding site. Residues Glu-59 and Gln-102 each coordinate L-methionine. ATP-binding positions include 170 to 172 (DGK), 238 to 241 (SGRF), Asp-249, 255 to 256 (RK), Ala-272, Lys-276, and Lys-280. Residue Asp-249 participates in L-methionine binding. L-methionine is bound at residue Lys-280.

It belongs to the AdoMet synthase family. In terms of assembly, homotetramer. Mn(2+) serves as cofactor. Requires Mg(2+) as cofactor. It depends on Co(2+) as a cofactor. K(+) is required as a cofactor.

Its subcellular location is the cytoplasm. It carries out the reaction L-methionine + ATP + H2O = S-adenosyl-L-methionine + phosphate + diphosphate. It functions in the pathway amino-acid biosynthesis; S-adenosyl-L-methionine biosynthesis; S-adenosyl-L-methionine from L-methionine: step 1/1. Catalyzes the formation of S-adenosylmethionine from methionine and ATP. The reaction comprises two steps that are both catalyzed by the same enzyme: formation of S-adenosylmethionine (AdoMet) and triphosphate, and subsequent hydrolysis of the triphosphate. This chain is S-adenosylmethionine synthase (METM), found in Chlamydomonas reinhardtii (Chlamydomonas smithii).